A 358-amino-acid chain; its full sequence is Spermatogenesis-associated protein 22 (358 aa).

Composition is skewed to polar residues over residues 1 to 12 (MKRNLNESSARS), 30 to 51 (QPLTSNPLQNDPGVSTVSDSYG), 81 to 121 (PASA…TSLR), and 150 to 159 (QQQKQFQTPE). 3 disordered regions span residues 1–51 (MKRN…DSYG), 81–122 (PASA…SLRT), and 150–172 (QQQKQFQTPEFPNLPGHKEAEVP).

In terms of assembly, component of a multiprotein complex with MEIOB and RPA2. Interacts with MEIOB. Interacts with the complex BRME1:HSF2BP:BRCA2. In terms of tissue distribution, specifically expressed in gonadal germ cells, when male and female germ cells progress through prophase of meiosis I.

The protein localises to the chromosome. In terms of biological role, meiosis-specific protein required for homologous recombination in meiosis I. The sequence is that of Spermatogenesis-associated protein 22 from Mus musculus (Mouse).